We begin with the raw amino-acid sequence, 156 residues long: Putative pre-16S rRNA nuclease (156 aa).

This sequence belongs to the YqgF nuclease family.

The protein resides in the cytoplasm. Its function is as follows. Could be a nuclease involved in processing of the 5'-end of pre-16S rRNA. This chain is Putative pre-16S rRNA nuclease, found in Ehrlichia canis (strain Jake).